A 523-amino-acid chain; its full sequence is 2-isopropylmalate synthase (523 aa).

Positions 5-267 (VIIFDTTLRD…ETGINAKEIH (263 aa)) constitute a Pyruvate carboxyltransferase domain. Mn(2+) is bound by residues D14, H202, H204, and N238. The regulatory domain stretch occupies residues 392-523 (QLKQLVVHSD…QQKARSLGGV (132 aa)).

It belongs to the alpha-IPM synthase/homocitrate synthase family. LeuA type 1 subfamily. Homodimer. It depends on Mn(2+) as a cofactor.

The protein localises to the cytoplasm. The catalysed reaction is 3-methyl-2-oxobutanoate + acetyl-CoA + H2O = (2S)-2-isopropylmalate + CoA + H(+). Its pathway is amino-acid biosynthesis; L-leucine biosynthesis; L-leucine from 3-methyl-2-oxobutanoate: step 1/4. In terms of biological role, catalyzes the condensation of the acetyl group of acetyl-CoA with 3-methyl-2-oxobutanoate (2-ketoisovalerate) to form 3-carboxy-3-hydroxy-4-methylpentanoate (2-isopropylmalate). In Shewanella woodyi (strain ATCC 51908 / MS32), this protein is 2-isopropylmalate synthase.